The chain runs to 473 residues: Membrane protein TMS1 (473 aa).

Topologically, residues 1-6 (MGAVIS) are cytoplasmic. The chain crosses the membrane as a helical span at residues 7–29 (LPVSMAGSFVASCFGGCCSNLVT). Topologically, residues 30–38 (KTASSLGSS) are vacuolar. Residues 39–61 (SLGTRLLYAVWLLLNSLISWVSY) traverse the membrane as a helical segment. Topologically, residues 62–81 (SANKSILWPGKTCTGTGECG) are cytoplasmic. Residues 82 to 104 (FFTVHRLNFALGCLHLILALVLT) traverse the membrane as a helical segment. Over 105 to 118 (GVKSTNDVRAALQN) the chain is Vacuolar. A helical membrane pass occupies residues 119–138 (SWWSLKFILYLCLIVLSFVI). At 139–144 (PNDFYI) the chain is on the cytoplasmic side. A helical membrane pass occupies residues 145 to 167 (FFSKWVSVPSGAIFILVGLILLV). The Vacuolar portion of the chain corresponds to 168–194 (DFAHEWAETCISHVESEDEDSSFWQRF). The chain crosses the membrane as a helical span at residues 195–217 (LVLGTTSMYTASIIMTVVMYVMF). The Cytoplasmic segment spans residues 218–228 (CHQQCNMNQTA). A helical membrane pass occupies residues 229-246 (VTVNLILTVITLVLSVNP). Topologically, residues 247–295 (KIQEANPKSGLAQSSMVSVYCTYLTMSAMSSEPDDKMCNPLVRSSGTRK) are vacuolar. A helical membrane pass occupies residues 296–318 (FSIILGSLFTFIAIAYTTTRAAA). Residues 319-398 (NSAFQGTNTN…DDERTGTKYN (80 aa)) are Cytoplasmic-facing. The chain crosses the membrane as a helical span at residues 399-421 (YTLFHVIFFLATQWIAILLTINV). At 422-435 (TQDDVGDFIPVGRT) the chain is on the vacuolar side. A helical membrane pass occupies residues 436–458 (YFYSWVKIVSAWICYALYGWTVV). Topologically, residues 459–473 (APAIMPDRFDYENYY) are cytoplasmic.

Belongs to the TDE1 family.

Its subcellular location is the membrane. This Saccharomyces cerevisiae (strain ATCC 204508 / S288c) (Baker's yeast) protein is Membrane protein TMS1 (TMS1).